A 908-amino-acid polypeptide reads, in one-letter code: Protein translocase subunit SecA (908 aa).

ATP contacts are provided by residues glutamine 87, 105-109, and aspartate 511; that span reads GEGKT. The span at 559–570 shows a compositional bias: basic and acidic residues; it reads ERHESRRIDNQL. Disordered regions lie at residues 559–582 and 841–908; these read ERHE…DPGS and RRRR…GRLE. The span at 847 to 856 shows a compositional bias: low complexity; sequence LAQQMQRAQA. The segment covering 862–873 has biased composition (acidic residues); that stretch reads TEEDSDAEEQAE. Cysteine 892, cysteine 894, cysteine 903, and histidine 904 together coordinate Zn(2+). Over residues 898–908 the composition is skewed to basic residues; the sequence is KKYKQCHGRLE.

It belongs to the SecA family. As to quaternary structure, monomer and homodimer. Part of the essential Sec protein translocation apparatus which comprises SecA, SecYEG and auxiliary proteins SecDF-YajC and YidC. Requires Zn(2+) as cofactor.

It is found in the cell inner membrane. The protein localises to the cytoplasm. The catalysed reaction is ATP + H2O + cellular proteinSide 1 = ADP + phosphate + cellular proteinSide 2.. Its function is as follows. Part of the Sec protein translocase complex. Interacts with the SecYEG preprotein conducting channel. Has a central role in coupling the hydrolysis of ATP to the transfer of proteins into and across the cell membrane, serving both as a receptor for the preprotein-SecB complex and as an ATP-driven molecular motor driving the stepwise translocation of polypeptide chains across the membrane. The chain is Protein translocase subunit SecA from Hahella chejuensis (strain KCTC 2396).